The chain runs to 472 residues: Carbohydrate sulfotransferase 3 (472 aa).

The Cytoplasmic portion of the chain corresponds to 1-19 (MEKGLALPQDFRDLVHSLK). The chain crosses the membrane as a helical; Signal-anchor for type II membrane protein span at residues 20-38 (IRGRYVLFLAFVVIVFIFI). Residues 39–472 (EKENKIISRV…LEERGTFWVT (434 aa)) are Lumenal-facing. Residues N63, N74, and N96 are each glycosylated (N-linked (GlcNAc...) asparagine). 135-141 (TRTGSSF) lines the 3'-phosphoadenylyl sulfate pocket. The N-linked (GlcNAc...) asparagine glycan is linked to N250. Position 295–303 (295–303 (RDPRAVLAS)) interacts with 3'-phosphoadenylyl sulfate. N-linked (GlcNAc...) asparagine glycans are attached at residues N413 and N457.

Belongs to the sulfotransferase 1 family. Gal/GlcNAc/GalNAc subfamily. Post-translationally, N-glycosylated. In terms of tissue distribution, widely expressed. Highly expressed in spleen, lung, eye and stomach. Constitutively expressed at low level during the mid- to late-gestation period. Expressed in the brain in a temporally controlled manner: peaks at 2 weeks after birth in the cerebellum, but at 3 weeks in the cerebrum. Localizes to stromal cells in the bone marrow, and stromal cells in the marginal zone and red pulp of the spleen, but the sense probe did not.

It is found in the golgi apparatus membrane. It catalyses the reaction chondroitin beta-D-glucuronate + n 3'-phosphoadenylyl sulfate = chondroitin 6'-sulfate + n adenosine 3',5'-bisphosphate + n H(+). The catalysed reaction is 3'-phosphoadenylyl sulfate + keratan = adenosine 3',5'-bisphosphate + keratan 6'-sulfate.. Its function is as follows. Sulfotransferase that utilizes 3'-phospho-5'-adenylyl sulfate (PAPS) as sulfonate donor to catalyze the transfer of sulfate to position 6 of the N-acetylgalactosamine (GalNAc) residue of chondroitin. Chondroitin sulfate constitutes the predominant proteoglycan present in cartilage and is distributed on the surfaces of many cells and extracellular matrices. Catalyzes with a lower efficiency the sulfation of Gal residues of keratan sulfate, another glycosaminoglycan. Can also catalyze the sulfation of the Gal residues in sialyl N-acetyllactosamine (sialyl LacNAc) oligosaccharides. May play a role in the maintenance of naive T-lymphocytes in the spleen. This chain is Carbohydrate sulfotransferase 3 (Chst3), found in Mus musculus (Mouse).